A 591-amino-acid polypeptide reads, in one-letter code: Aspartate--tRNA(Asp/Asn) ligase (591 aa).

Position 174 (Glu174) interacts with L-aspartate. Residues 198-201 form an aspartate region; it reads QLFK. L-aspartate is bound at residue Arg220. ATP-binding positions include 220–222 and Gln229; that span reads RDE. Position 450 (His450) interacts with L-aspartate. Glu483 is an ATP binding site. Arg490 contributes to the L-aspartate binding site. 535–538 contacts ATP; it reads GLDR.

Belongs to the class-II aminoacyl-tRNA synthetase family. Type 1 subfamily. In terms of assembly, homodimer.

Its subcellular location is the cytoplasm. It catalyses the reaction tRNA(Asx) + L-aspartate + ATP = L-aspartyl-tRNA(Asx) + AMP + diphosphate. Its function is as follows. Aspartyl-tRNA synthetase with relaxed tRNA specificity since it is able to aspartylate not only its cognate tRNA(Asp) but also tRNA(Asn). Reaction proceeds in two steps: L-aspartate is first activated by ATP to form Asp-AMP and then transferred to the acceptor end of tRNA(Asp/Asn). The polypeptide is Aspartate--tRNA(Asp/Asn) ligase (Pseudomonas syringae pv. syringae (strain B728a)).